We begin with the raw amino-acid sequence, 156 residues long: Small ribosomal subunit protein uS7 (156 aa).

This sequence belongs to the universal ribosomal protein uS7 family. In terms of assembly, part of the 30S ribosomal subunit. Contacts proteins S9 and S11.

One of the primary rRNA binding proteins, it binds directly to 16S rRNA where it nucleates assembly of the head domain of the 30S subunit. Is located at the subunit interface close to the decoding center, probably blocks exit of the E-site tRNA. In Acholeplasma laidlawii (strain PG-8A), this protein is Small ribosomal subunit protein uS7.